Reading from the N-terminus, the 481-residue chain is Glutamyl-tRNA(Gln) amidotransferase subunit A (481 aa).

Catalysis depends on charge relay system residues K76 and S151. Catalysis depends on S175, which acts as the Acyl-ester intermediate.

Belongs to the amidase family. GatA subfamily. Heterotrimer of A, B and C subunits.

The catalysed reaction is L-glutamyl-tRNA(Gln) + L-glutamine + ATP + H2O = L-glutaminyl-tRNA(Gln) + L-glutamate + ADP + phosphate + H(+). Functionally, allows the formation of correctly charged Gln-tRNA(Gln) through the transamidation of misacylated Glu-tRNA(Gln) in organisms which lack glutaminyl-tRNA synthetase. The reaction takes place in the presence of glutamine and ATP through an activated gamma-phospho-Glu-tRNA(Gln). The sequence is that of Glutamyl-tRNA(Gln) amidotransferase subunit A from Chlorobaculum tepidum (strain ATCC 49652 / DSM 12025 / NBRC 103806 / TLS) (Chlorobium tepidum).